We begin with the raw amino-acid sequence, 215 residues long: Reticulon-like protein B14 (215 aa).

The region spanning phenylalanine 31 to threonine 211 is the Reticulon domain. The next 3 helical transmembrane spans lie at lysine 41–glutamate 61, tyrosine 62–tryptophan 82, and leucine 141–phenylalanine 161.

It localises to the endoplasmic reticulum membrane. The sequence is that of Reticulon-like protein B14 (RTNLB14) from Arabidopsis thaliana (Mouse-ear cress).